An 88-amino-acid polypeptide reads, in one-letter code: Cytochrome c6 (88 aa).

Positions 15, 18, 19, and 61 each coordinate heme c.

It belongs to the cytochrome c family. PetJ subfamily. As to quaternary structure, monomer. Binds 1 heme c group covalently per subunit.

It is found in the plastid. Its subcellular location is the chloroplast thylakoid lumen. Functions as an electron carrier between membrane-bound cytochrome b6-f and photosystem I in oxygenic photosynthesis. This is Cytochrome c6 (petJ) from Bryopsis maxima (Green alga).